The sequence spans 287 residues: Acetylglutamate kinase (287 aa).

Residues 70 to 71 (GG), Arg-92, and Asn-184 each bind substrate.

Belongs to the acetylglutamate kinase family. ArgB subfamily.

Its subcellular location is the cytoplasm. It carries out the reaction N-acetyl-L-glutamate + ATP = N-acetyl-L-glutamyl 5-phosphate + ADP. It functions in the pathway amino-acid biosynthesis; L-arginine biosynthesis; N(2)-acetyl-L-ornithine from L-glutamate: step 2/4. Its function is as follows. Catalyzes the ATP-dependent phosphorylation of N-acetyl-L-glutamate. This chain is Acetylglutamate kinase, found in Roseobacter denitrificans (strain ATCC 33942 / OCh 114) (Erythrobacter sp. (strain OCh 114)).